Reading from the N-terminus, the 904-residue chain is Endoplasmic reticulum metallopeptidase 1 (904 aa).

An N-acetylmethionine modification is found at M1. Residues 1-63 (MEWGSESAAV…PGGSGGASRG (63 aa)) lie on the Cytoplasmic side of the membrane. Positions 1 to 65 (MEWGSESAAV…GSGGASRGAG (65 aa)) are disordered. Positions 55–65 (GGSGGASRGAG) are enriched in gly residues. The helical transmembrane segment at 64 to 84 (AGTGLSEVRAALGLALYLIAL) threads the bilayer. Residues 85–399 (RTLVQLSLQQ…AASKYRHGNM (315 aa)) are Lumenal-facing. N182 carries N-linked (GlcNAc...) asparagine glycosylation. A disulfide bond links C204 and C222. Zn(2+)-binding residues include H205 and D217. E251 serves as the catalytic Proton acceptor. E252, E278, and H354 together coordinate Zn(2+). A helical transmembrane segment spans residues 400-420 (VFFDVLGLFVIAYPSRIGSII). The Cytoplasmic segment spans residues 421–457 (NYMVVMGVVLYLGKKFLQPKHKTGNYKKDFLCGLGIT). The helical transmembrane segment at 458 to 478 (LISWFTSLVTVLIIAVFISLI) threads the bilayer. The Lumenal portion of the chain corresponds to 479–489 (GQSLSWYNHFY). The helical transmembrane segment at 490-510 (VSVCLYGTATVAKIILIHTLA) threads the bilayer. Residues 511-519 (KRFYYMNAS) lie on the Cytoplasmic side of the membrane. A helical transmembrane segment spans residues 520–540 (AQYLGEVFFDISLFVHCCFLV). T541 is a topological domain (lumenal). A helical membrane pass occupies residues 542–562 (LTYQGLCSAFISAVWVAFPLL). Over 563–579 (TKLCVHKDFKQHGAQGK) the chain is Cytoplasmic. Residues 580-600 (FIAFYLLGMFIPYLYALYLIW) traverse the membrane as a helical segment. The Lumenal segment spans residues 601–621 (AVFEMFTPILGRSGSEIPPDV). The chain crosses the membrane as a helical span at residues 622–642 (VLASILAGCTMILSSYFINFI). Residues 643 to 651 (YLAKSTKKT) are Cytoplasmic-facing. The chain crosses the membrane as a helical span at residues 652 to 672 (MLTLTLVCAITFLLVCSGTFF). The Lumenal segment spans residues 673-904 (PYSSNPANPK…WVCTYDLFVF (232 aa)). N730 carries N-linked (GlcNAc...) asparagine glycosylation.

This sequence belongs to the peptidase M28 family. The cofactor is Zn(2+).

The protein localises to the endoplasmic reticulum membrane. Its function is as follows. Within the ovary, required for the organization of somatic cells and oocytes into discrete follicular structures. In Homo sapiens (Human), this protein is Endoplasmic reticulum metallopeptidase 1.